Consider the following 1361-residue polypeptide: DNA-directed RNA polymerase subunit beta (1361 aa).

This sequence belongs to the RNA polymerase beta chain family. In terms of assembly, the RNAP catalytic core consists of 2 alpha, 1 beta, 1 beta' and 1 omega subunit. When a sigma factor is associated with the core the holoenzyme is formed, which can initiate transcription.

The catalysed reaction is RNA(n) + a ribonucleoside 5'-triphosphate = RNA(n+1) + diphosphate. DNA-dependent RNA polymerase catalyzes the transcription of DNA into RNA using the four ribonucleoside triphosphates as substrates. This Cellvibrio japonicus (strain Ueda107) (Pseudomonas fluorescens subsp. cellulosa) protein is DNA-directed RNA polymerase subunit beta.